The following is a 229-amino-acid chain: Ribonuclease 3 (229 aa).

The RNase III domain maps to leucine 7 to glycine 132. Glutamate 45 is a binding site for Mg(2+). Aspartate 49 is a catalytic residue. Residues aspartate 118 and glutamate 121 each contribute to the Mg(2+) site. Glutamate 121 is an active-site residue. A DRBM domain is found at aspartate 157–alanine 226.

The protein belongs to the ribonuclease III family. Homodimer. Mg(2+) is required as a cofactor.

The protein resides in the cytoplasm. It catalyses the reaction Endonucleolytic cleavage to 5'-phosphomonoester.. Digests double-stranded RNA. Involved in the processing of primary rRNA transcript to yield the immediate precursors to the large and small rRNAs (23S and 16S). Processes some mRNAs, and tRNAs when they are encoded in the rRNA operon. Processes pre-crRNA and tracrRNA of type II CRISPR loci if present in the organism. The protein is Ribonuclease 3 of Cereibacter sphaeroides (strain ATCC 17025 / ATH 2.4.3) (Rhodobacter sphaeroides).